A 326-amino-acid chain; its full sequence is tRNA-modifying protein YgfZ (326 aa).

Residues Trp-27 and Trp-189 each coordinate folate.

The protein belongs to the tRNA-modifying YgfZ family.

Its subcellular location is the cytoplasm. In terms of biological role, folate-binding protein involved in regulating the level of ATP-DnaA and in the modification of some tRNAs. It is probably a key factor in regulatory networks that act via tRNA modification, such as initiation of chromosomal replication. The polypeptide is tRNA-modifying protein YgfZ (Shigella dysenteriae serotype 1 (strain Sd197)).